The chain runs to 292 residues: Ribosomal RNA small subunit methyltransferase A (292 aa).

Residues Asn-28, Leu-30, Gly-55, Glu-76, Asp-101, and Asn-126 each contribute to the S-adenosyl-L-methionine site.

It belongs to the class I-like SAM-binding methyltransferase superfamily. rRNA adenine N(6)-methyltransferase family. RsmA subfamily.

It localises to the cytoplasm. It carries out the reaction adenosine(1518)/adenosine(1519) in 16S rRNA + 4 S-adenosyl-L-methionine = N(6)-dimethyladenosine(1518)/N(6)-dimethyladenosine(1519) in 16S rRNA + 4 S-adenosyl-L-homocysteine + 4 H(+). Its function is as follows. Specifically dimethylates two adjacent adenosines (A1518 and A1519) in the loop of a conserved hairpin near the 3'-end of 16S rRNA in the 30S particle. May play a critical role in biogenesis of 30S subunits. The sequence is that of Ribosomal RNA small subunit methyltransferase A from Bacillus anthracis.